The following is a 184-amino-acid chain: UPF0397 protein SAB2561c (184 aa).

Transmembrane regions (helical) follow at residues 11–31 (VVAI…VVIP), 44–64 (AFLA…TGLV), 77–97 (AWWS…WIGL), 111–131 (MIYF…LIAP), and 148–168 (QGVI…TILL).

It belongs to the UPF0397 family.

It is found in the cell membrane. The protein is UPF0397 protein SAB2561c of Staphylococcus aureus (strain bovine RF122 / ET3-1).